The sequence spans 100 residues: Urease subunit gamma (100 aa).

Belongs to the urease gamma subunit family. As to quaternary structure, heterotrimer of UreA (gamma), UreB (beta) and UreC (alpha) subunits. Three heterotrimers associate to form the active enzyme.

The protein resides in the cytoplasm. The catalysed reaction is urea + 2 H2O + H(+) = hydrogencarbonate + 2 NH4(+). It functions in the pathway nitrogen metabolism; urea degradation; CO(2) and NH(3) from urea (urease route): step 1/1. This is Urease subunit gamma from Bacillus sp. (strain TB-90).